Consider the following 454-residue polypeptide: 3-phosphoshikimate 1-carboxyvinyltransferase (454 aa).

The tract at residues 1 to 31 (MSENHSEGASRPVISRRPAAGLRADHPVHVP) is disordered. Residues lysine 34, serine 35, and arginine 39 each coordinate 3-phosphoshikimate. Residue lysine 34 participates in phosphoenolpyruvate binding. Positions 107 and 135 each coordinate phosphoenolpyruvate. The 3-phosphoshikimate site is built by serine 180, glutamine 182, aspartate 334, and lysine 361. Residue glutamine 182 participates in phosphoenolpyruvate binding. Aspartate 334 serves as the catalytic Proton acceptor. 2 residues coordinate phosphoenolpyruvate: arginine 365 and arginine 409.

Belongs to the EPSP synthase family. In terms of assembly, monomer.

Its subcellular location is the cytoplasm. It carries out the reaction 3-phosphoshikimate + phosphoenolpyruvate = 5-O-(1-carboxyvinyl)-3-phosphoshikimate + phosphate. Its pathway is metabolic intermediate biosynthesis; chorismate biosynthesis; chorismate from D-erythrose 4-phosphate and phosphoenolpyruvate: step 6/7. In terms of biological role, catalyzes the transfer of the enolpyruvyl moiety of phosphoenolpyruvate (PEP) to the 5-hydroxyl of shikimate-3-phosphate (S3P) to produce enolpyruvyl shikimate-3-phosphate and inorganic phosphate. The chain is 3-phosphoshikimate 1-carboxyvinyltransferase from Granulibacter bethesdensis (strain ATCC BAA-1260 / CGDNIH1).